The primary structure comprises 178 residues: Acireductone dioxygenase 1 (178 aa).

Fe(2+) is bound by residues histidine 84, histidine 86, glutamate 90, and histidine 130. Ni(2+) contacts are provided by histidine 84, histidine 86, glutamate 90, and histidine 130.

It belongs to the acireductone dioxygenase (ARD) family. Requires Fe(2+) as cofactor. Ni(2+) is required as a cofactor.

It is found in the cytoplasm. The protein resides in the nucleus. It carries out the reaction 1,2-dihydroxy-5-(methylsulfanyl)pent-1-en-3-one + O2 = 4-methylsulfanyl-2-oxobutanoate + formate + 2 H(+). The enzyme catalyses 1,2-dihydroxy-5-(methylsulfanyl)pent-1-en-3-one + O2 = 3-(methylsulfanyl)propanoate + CO + formate + 2 H(+). Its pathway is amino-acid biosynthesis; L-methionine biosynthesis via salvage pathway; L-methionine from S-methyl-5-thio-alpha-D-ribose 1-phosphate: step 5/6. In terms of biological role, catalyzes 2 different reactions between oxygen and the acireductone 1,2-dihydroxy-3-keto-5-methylthiopentene (DHK-MTPene) depending upon the metal bound in the active site. Fe-containing acireductone dioxygenase (Fe-ARD) produces formate and 2-keto-4-methylthiobutyrate (KMTB), the alpha-ketoacid precursor of methionine in the methionine recycle pathway. Ni-containing acireductone dioxygenase (Ni-ARD) produces methylthiopropionate, carbon monoxide and formate, and does not lie on the methionine recycle pathway. The polypeptide is Acireductone dioxygenase 1 (Coprinopsis cinerea (strain Okayama-7 / 130 / ATCC MYA-4618 / FGSC 9003) (Inky cap fungus)).